The following is a 106-amino-acid chain: UPF0145 protein GSU2791 (106 aa).

It belongs to the UPF0145 family.

This Geobacter sulfurreducens (strain ATCC 51573 / DSM 12127 / PCA) protein is UPF0145 protein GSU2791.